The primary structure comprises 94 residues: Pyrimidine/purine nucleoside phosphorylase (94 aa).

The protein belongs to the nucleoside phosphorylase PpnP family.

The catalysed reaction is a purine D-ribonucleoside + phosphate = a purine nucleobase + alpha-D-ribose 1-phosphate. The enzyme catalyses adenosine + phosphate = alpha-D-ribose 1-phosphate + adenine. It carries out the reaction cytidine + phosphate = cytosine + alpha-D-ribose 1-phosphate. It catalyses the reaction guanosine + phosphate = alpha-D-ribose 1-phosphate + guanine. The catalysed reaction is inosine + phosphate = alpha-D-ribose 1-phosphate + hypoxanthine. The enzyme catalyses thymidine + phosphate = 2-deoxy-alpha-D-ribose 1-phosphate + thymine. It carries out the reaction uridine + phosphate = alpha-D-ribose 1-phosphate + uracil. It catalyses the reaction xanthosine + phosphate = alpha-D-ribose 1-phosphate + xanthine. Functionally, catalyzes the phosphorolysis of diverse nucleosides, yielding D-ribose 1-phosphate and the respective free bases. Can use uridine, adenosine, guanosine, cytidine, thymidine, inosine and xanthosine as substrates. Also catalyzes the reverse reactions. In Klebsiella pneumoniae (strain 342), this protein is Pyrimidine/purine nucleoside phosphorylase.